The chain runs to 124 residues: UPF0344 protein OB1184 (124 aa).

Helical transmembrane passes span 3–23, 33–53, 62–82, and 104–124; these read HMHI…LVMY, IIHM…GILT, MPIL…VAMM, and IALV…FLFI.

This sequence belongs to the UPF0344 family.

It is found in the cell membrane. The protein is UPF0344 protein OB1184 of Oceanobacillus iheyensis (strain DSM 14371 / CIP 107618 / JCM 11309 / KCTC 3954 / HTE831).